The following is a 211-amino-acid chain: Probable endopeptidase cgR_2070 (211 aa).

The first 35 residues, 1–35 (MGKHRRNNSNATRKAVAASAVALGATAAIASPAQA), serve as a signal peptide directing secretion. Residues 97-211 (ASTGQAIVDA…YMPFHSAVRF (115 aa)) enclose the NlpC/P60 domain. Cys-127 serves as the catalytic Nucleophile. Residue His-175 is the Proton acceptor of the active site. His-187 is an active-site residue.

It belongs to the peptidase C40 family.

It is found in the secreted. This Corynebacterium glutamicum (strain R) protein is Probable endopeptidase cgR_2070.